Here is a 254-residue protein sequence, read N- to C-terminus: Probable electron transfer flavoprotein subunit beta (254 aa).

Belongs to the ETF beta-subunit/FixA family. Heterodimer of an alpha and a beta subunit. Requires FAD as cofactor. AMP is required as a cofactor.

It is found in the mitochondrion matrix. Functionally, the electron transfer flavoprotein serves as a specific electron acceptor for several dehydrogenases, including five acyl-CoA dehydrogenases, glutaryl-CoA and sarcosine dehydrogenase. It transfers the electrons to the main mitochondrial respiratory chain via ETF-ubiquinone oxidoreductase (ETF dehydrogenase). This is Probable electron transfer flavoprotein subunit beta from Schizosaccharomyces pombe (strain 972 / ATCC 24843) (Fission yeast).